Reading from the N-terminus, the 590-residue chain is Ankyrin repeat-containing protein ITN1 (590 aa).

The disordered stretch occupies residues 25-44 (ENQNPMIDPSPTPSPSATAT). ANK repeat units follow at residues 73–102 (HNDT…SQME), 128–157 (LGET…RESI), 163–192 (SGYD…TLSQ), 197–226 (SNAT…NLLE), 231–260 (NNKN…QLAR), 265–294 (KGQT…AIVM), and 299–329 (SCNT…NANT). Helical transmembrane passes span 422–442 (VTVV…TVPG), 460–480 (IFFI…VVQI), 500–520 (LMWL…YIVV), and 531–551 (VTVV…YYVV).

Interacts with REM19/RTV1. Expressed in roots, shoots, leaf vasculature and stems.

The protein localises to the cell membrane. Functionally, involved in salt stress tolerance. May act through abscisic acid (ABA) signaling pathways and promote reactive oxygen species (ROS) production. The sequence is that of Ankyrin repeat-containing protein ITN1 from Arabidopsis thaliana (Mouse-ear cress).